Consider the following 421-residue polypeptide: Subtilisin-like protease 2 (421 aa).

The N-terminal stretch at 1 to 16 is a signal peptide; it reads MQLLNFGLLLLPFVAG. The propeptide occupies 17-122; that stretch reads DLAPQPEPLL…VHPDQHVYLA (106 aa). Residues 36-122 form the Inhibitor I9 domain; sequence QYIVTLKEGL…VHPDQHVYLA (87 aa). Residues 131 to 421 enclose the Peptidase S8 domain; sequence RWGLGYMSSK…ERKFTLPKYF (291 aa). Active-site charge relay system residues include Asp-169 and His-201. Residues Asn-248, Asn-261, and Asn-348 are each glycosylated (N-linked (GlcNAc...) asparagine). Catalysis depends on Ser-357, which acts as the Charge relay system. Asn-388 carries an N-linked (GlcNAc...) asparagine glycan.

Belongs to the peptidase S8 family.

The protein resides in the secreted. Its function is as follows. Secreted subtilisin-like serine protease with keratinolytic activity that contributes to pathogenicity. This Trichophyton tonsurans (Scalp ringworm fungus) protein is Subtilisin-like protease 2 (SUB2).